Here is a 181-residue protein sequence, read N- to C-terminus: Probable inactive acireductone dioxygenase 2 (181 aa).

Belongs to the acireductone dioxygenase (ARD) family.

Its subcellular location is the cytoplasm. It localises to the nucleus. In terms of biological role, probable inactive acireductone dioxygenase. The polypeptide is Probable inactive acireductone dioxygenase 2 (Sorghum bicolor (Sorghum)).